Here is a 424-residue protein sequence, read N- to C-terminus: Splicing factor 3B subunit 4 (424 aa).

A2 is subject to N-acetylalanine. RRM domains follow at residues 13 to 91 and 100 to 179; these read ATVY…KASA and ANIF…YAFK. Y56 is subject to Phosphotyrosine. Positions 207-424 are disordered; sequence PHQLFADAPP…RGPLRGPLPQ (218 aa). Positions 222–231 are enriched in low complexity; sequence NPVVSSLGSG. Residues 232-268 show a composition bias toward pro residues; that stretch reads LPPPGMPPPGSFPPPVPPPGALPPGIPPAMPPPPMPP. The segment covering 303–323 has biased composition (low complexity); sequence HPGMSQMQLAHHGPHGLGHPH. Pro residues-rich tracts occupy residues 332 to 381 and 388 to 424; these read QPPP…PLMP and PPRPPPYGYQRGPLPPPRPTPRPPVPPRGPLRGPLPQ.

It belongs to the SF3B4 family. As to quaternary structure, component of the 17S U2 SnRNP complex, a ribonucleoprotein complex that contains small nuclear RNA (snRNA) U2 and a number of specific proteins. Part of the SF3B subcomplex of the 17S U2 SnRNP complex. SF3B associates with the splicing subcomplex SF3A and a 12S RNA unit to form the U2 small nuclear ribonucleoproteins complex (U2 snRNP). SF3B4 has been found in complex spliceosome 'B' and 'C' as well. Component of the minor (U12-type spliceosome) spliceosome. Found in a complex with PRMT9, SF3B2 and SF3B4.

The protein resides in the nucleus. In terms of biological role, component of the 17S U2 SnRNP complex of the spliceosome, a large ribonucleoprotein complex that removes introns from transcribed pre-mRNAs. The 17S U2 SnRNP complex (1) directly participates in early spliceosome assembly and (2) mediates recognition of the intron branch site during pre-mRNA splicing by promoting the selection of the pre-mRNA branch-site adenosine, the nucleophile for the first step of splicing. Within the 17S U2 SnRNP complex, SF3B4 is part of the SF3B subcomplex, which is required for 'A' complex assembly formed by the stable binding of U2 snRNP to the branchpoint sequence in pre-mRNA. Sequence independent binding of SF3A and SF3B subcomplexes upstream of the branch site is essential, it may anchor U2 snRNP to the pre-mRNA. May also be involved in the assembly of the 'E' complex. Also acts as a component of the minor spliceosome, which is involved in the splicing of U12-type introns in pre-mRNAs. This Rattus norvegicus (Rat) protein is Splicing factor 3B subunit 4 (Sf3b4).